The sequence spans 259 residues: MKYKIFASTTPQTEPVLNKLRAVLKTWQAVENGYEYVFVLGGDGFFVSTLANYNCDSCKVVGINTGHIGFYTSFNGDDLDENFISKLTSFEFKKINLLEVKTKNHSFLVLNELAVYTNTAYPINIFIDDNHWESYRGSGLLIGPRTGSTALAKSAKGAVIFPNVDVVQIIELNPLLHPNQITIQSPIILPMQTKVEFRIKKAFKAEQFPNFYADGIKLDLKNEDTSISFQLVLSRSMFHASLKTKDFIDKLKSTFIKQS.

The active-site Proton acceptor is the aspartate 43. Residues 43-44, 111-112, and arginine 136 contribute to the NAD(+) site; these read DG and NE.

Belongs to the NAD kinase family. Requires a divalent metal cation as cofactor.

The protein resides in the cytoplasm. The enzyme catalyses NAD(+) + ATP = ADP + NADP(+) + H(+). Its function is as follows. Involved in the regulation of the intracellular balance of NAD and NADP, and is a key enzyme in the biosynthesis of NADP. Catalyzes specifically the phosphorylation on 2'-hydroxyl of the adenosine moiety of NAD to yield NADP. This chain is NAD kinase, found in Mycoplasma genitalium (strain ATCC 33530 / DSM 19775 / NCTC 10195 / G37) (Mycoplasmoides genitalium).